A 450-amino-acid chain; its full sequence is UDP-N-acetylmuramoylalanine--D-glutamate ligase (450 aa).

Residue 119–125 (GTNGKTT) participates in ATP binding.

Belongs to the MurCDEF family.

It is found in the cytoplasm. It carries out the reaction UDP-N-acetyl-alpha-D-muramoyl-L-alanine + D-glutamate + ATP = UDP-N-acetyl-alpha-D-muramoyl-L-alanyl-D-glutamate + ADP + phosphate + H(+). Its pathway is cell wall biogenesis; peptidoglycan biosynthesis. In terms of biological role, cell wall formation. Catalyzes the addition of glutamate to the nucleotide precursor UDP-N-acetylmuramoyl-L-alanine (UMA). The protein is UDP-N-acetylmuramoylalanine--D-glutamate ligase of Lactococcus lactis subsp. lactis (strain IL1403) (Streptococcus lactis).